A 390-amino-acid polypeptide reads, in one-letter code: Succinate--CoA ligase [ADP-forming] subunit beta (390 aa).

Positions 9 to 245 (KHLLKKYNIP…TTQEDEHETM (237 aa)) constitute an ATP-grasp domain. Residues Lys-46, 53 to 55 (GRG), Glu-99, Ser-102, and Glu-107 each bind ATP. Positions 200 and 214 each coordinate Mg(2+). Substrate contacts are provided by residues Asn-265 and 322 to 324 (GIV).

This sequence belongs to the succinate/malate CoA ligase beta subunit family. In terms of assembly, heterotetramer of two alpha and two beta subunits. The cofactor is Mg(2+).

The catalysed reaction is succinate + ATP + CoA = succinyl-CoA + ADP + phosphate. The enzyme catalyses GTP + succinate + CoA = succinyl-CoA + GDP + phosphate. It participates in carbohydrate metabolism; tricarboxylic acid cycle; succinate from succinyl-CoA (ligase route): step 1/1. Its function is as follows. Succinyl-CoA synthetase functions in the citric acid cycle (TCA), coupling the hydrolysis of succinyl-CoA to the synthesis of either ATP or GTP and thus represents the only step of substrate-level phosphorylation in the TCA. The beta subunit provides nucleotide specificity of the enzyme and binds the substrate succinate, while the binding sites for coenzyme A and phosphate are found in the alpha subunit. The sequence is that of Succinate--CoA ligase [ADP-forming] subunit beta from Coxiella burnetii (strain Dugway 5J108-111).